We begin with the raw amino-acid sequence, 288 residues long: Polyamine aminopropyltransferase (288 aa).

One can recognise a PABS domain in the interval 11–245 (IEWYPRGYGV…SPWSFLVGVK (235 aa)). Residue Gln-36 participates in S-methyl-5'-thioadenosine binding. Spermidine-binding residues include His-67 and Asp-91. Residues Glu-111 and 148 to 149 (DG) contribute to the S-methyl-5'-thioadenosine site. Asp-166 serves as the catalytic Proton acceptor. Position 166–169 (166–169 (DSTD)) interacts with spermidine. Pro-173 lines the S-methyl-5'-thioadenosine pocket.

This sequence belongs to the spermidine/spermine synthase family. In terms of assembly, homodimer or homotetramer.

It is found in the cytoplasm. The enzyme catalyses S-adenosyl 3-(methylsulfanyl)propylamine + agmatine = N(1)-(3-aminopropyl)agmatine + S-methyl-5'-thioadenosine + H(+). The catalysed reaction is S-adenosyl 3-(methylsulfanyl)propylamine + putrescine = S-methyl-5'-thioadenosine + spermidine + H(+). It catalyses the reaction cadaverine + S-adenosyl 3-(methylsulfanyl)propylamine = aminopropylcadaverine + S-methyl-5'-thioadenosine + H(+). The protein operates within amine and polyamine biosynthesis; spermidine biosynthesis; spermidine from putrescine: step 1/1. In terms of biological role, involved in the biosynthesis of polyamines which are thought to support the growth of thermophilic microorganisms under high-temperature conditions. It seems that long-chain and branched-chain of polyamines effectively stabilize DNA and RNA, respectively. Catalyzes the irreversible transfer of a propylamine group from the amino donor S-adenosylmethioninamine (decarboxy-AdoMet) to agmatine to yield N1-aminopropylagmatine. It can also use cadaverine (1,5-diaminopentane) and putrescine (1,4-diaminobutane) as substrate with a lower activity than that of agmatine. The reaction involves a nucleophilic attack on the C-3 methylene of the propylamine moiety adjacent to the positively charged sulfur of decarboxy-AdoMet. The sequence is that of Polyamine aminopropyltransferase from Thermococcus kodakarensis (strain ATCC BAA-918 / JCM 12380 / KOD1) (Pyrococcus kodakaraensis (strain KOD1)).